Here is a 279-residue protein sequence, read N- to C-terminus: Virginiamycin B lyase (279 aa).

Residue histidine 215 participates in substrate binding. Glutamate 253 is a Mg(2+) binding site. Histidine 255 acts as the Proton acceptor in catalysis. Glutamate 270 serves as a coordination point for Mg(2+).

This sequence belongs to the Vgb family. As to quaternary structure, monomer. Requires Mg(2+) as cofactor.

Functionally, inactivates the type B streptogramin antibiotics by linearizing the lactone ring at the ester linkage, generating a free phenylglycine carboxylate and converting the threonyl moiety into 2-amino-butenoic acid. In Nocardia farcinica (strain IFM 10152), this protein is Virginiamycin B lyase.